Here is a 725-residue protein sequence, read N- to C-terminus: LPS-assembly protein LptD (725 aa).

Positions 1–25 (MSLLSKLHLILYICLLLLPLRFVNA) are cleaved as a signal peptide.

It belongs to the LptD family. Component of the lipopolysaccharide transport and assembly complex. Interacts with LptE and LptA.

Its subcellular location is the cell outer membrane. Functionally, together with LptE, is involved in the assembly of lipopolysaccharide (LPS) at the surface of the outer membrane. The chain is LPS-assembly protein LptD from Nitrosomonas eutropha (strain DSM 101675 / C91 / Nm57).